Consider the following 219-residue polypeptide: MSNQKALVIFSGGQDSTTCLIQAIQTYGRENVQAITFQYGQRHAVELERARWIAQDLGVKQTVLDLSLMRQITHNALMDDTAAIETAENGVPNTFVDGRNALFLLYAAIYAKGQGIRHIIAGVCETDFSGYPDCRDVFVKSMNVTLNLAMDYDFQIHTPLMYLTKAQTWALADEMGALDYIREQTHTCYNGIVGGCRECPSCILRERGLAEYLESKKAV.

Residue phenylalanine 10–leucine 20 participates in ATP binding. The Zn(2+) site is built by cysteine 188, cysteine 196, cysteine 199, and cysteine 202.

Belongs to the QueC family. The cofactor is Zn(2+).

It carries out the reaction 7-carboxy-7-deazaguanine + NH4(+) + ATP = 7-cyano-7-deazaguanine + ADP + phosphate + H2O + H(+). It participates in purine metabolism; 7-cyano-7-deazaguanine biosynthesis. Functionally, catalyzes the ATP-dependent conversion of 7-carboxy-7-deazaguanine (CDG) to 7-cyano-7-deazaguanine (preQ(0)). The chain is 7-cyano-7-deazaguanine synthase from Neisseria meningitidis serogroup A / serotype 4A (strain DSM 15465 / Z2491).